The sequence spans 326 residues: MSDFSPDMKNLDIDPIPVDCDLSYNTNIEVLKFTAQIIYIITGIFLNSAVLGTILWRCREVYSTNSFFTLFSVDCIANISILITEGLFARFFIYFTPICPVLADYFQSPLVGFKIIMLLTHHVSICKSLLQVLLVLNRMTCVLFPITHDSIWRKSLKYVISAVFLIPFCADWNIAISRVYMQSTYGGFWVSYFKKVSWASQSRFQLVFIIIALSFTFICTAITLLKLPERSKEIEKAISNATVIISIGFTFKVLFQIYYSFFFSYTDASSPVYGFSFLALDFLTVGSPIVMICVSRNLRTHIFKSKRKNQTLSKMLTRTSGMVIAR.

7 helical membrane passes run 36 to 56 (QIIYIITGIFLNSAVLGTILW), 67 to 83 (FFTLFSVDCIANISILI), 115 to 135 (IIMLLTHHVSICKSLLQVLLV), 156 to 176 (LKYVISAVFLIPFCADWNIAI), 204 to 224 (FQLVFIIIALSFTFICTAITL), 243 to 263 (VIISIGFTFKVLFQIYYSFFF), and 274 to 294 (GFSFLALDFLTVGSPIVMICV).

Belongs to the nematode receptor-like protein srg family.

It is found in the membrane. The polypeptide is Serpentine receptor class gamma-14 (srg-14) (Caenorhabditis elegans).